Reading from the N-terminus, the 127-residue chain is Fluoride-specific ion channel FluC (127 aa).

4 consecutive transmembrane segments (helical) span residues 2–22 (LSSL…RWAI), 35–55 (LGTL…IAIF), 68–88 (LITT…LEVV), and 104–124 (LLNL…VVWI). Residues Gly75 and Thr78 each contribute to the Na(+) site.

The protein belongs to the fluoride channel Fluc/FEX (TC 1.A.43) family.

It localises to the cell inner membrane. The enzyme catalyses fluoride(in) = fluoride(out). With respect to regulation, na(+) is not transported, but it plays an essential structural role and its presence is essential for fluoride channel function. Functionally, fluoride-specific ion channel. Important for reducing fluoride concentration in the cell, thus reducing its toxicity. The chain is Fluoride-specific ion channel FluC from Serratia proteamaculans (strain 568).